The sequence spans 76 residues: DNA-directed RNA polymerase subunit omega (76 aa).

Belongs to the RNA polymerase subunit omega family. As to quaternary structure, the RNAP catalytic core consists of 2 alpha, 1 beta, 1 beta' and 1 omega subunit. When a sigma factor is associated with the core the holoenzyme is formed, which can initiate transcription.

It catalyses the reaction RNA(n) + a ribonucleoside 5'-triphosphate = RNA(n+1) + diphosphate. Promotes RNA polymerase assembly. Latches the N- and C-terminal regions of the beta' subunit thereby facilitating its interaction with the beta and alpha subunits. This is DNA-directed RNA polymerase subunit omega from Staphylococcus carnosus (strain TM300).